Reading from the N-terminus, the 243-residue chain is Sugar fermentation stimulation protein homolog (243 aa).

Belongs to the SfsA family.

In Acaryochloris marina (strain MBIC 11017), this protein is Sugar fermentation stimulation protein homolog.